A 180-amino-acid chain; its full sequence is ATP synthase subunit delta (180 aa).

The protein belongs to the ATPase delta chain family. F-type ATPases have 2 components, F(1) - the catalytic core - and F(0) - the membrane proton channel. F(1) has five subunits: alpha(3), beta(3), gamma(1), delta(1), epsilon(1). F(0) has three main subunits: a(1), b(2) and c(10-14). The alpha and beta chains form an alternating ring which encloses part of the gamma chain. F(1) is attached to F(0) by a central stalk formed by the gamma and epsilon chains, while a peripheral stalk is formed by the delta and b chains.

The protein resides in the cell membrane. In terms of biological role, f(1)F(0) ATP synthase produces ATP from ADP in the presence of a proton or sodium gradient. F-type ATPases consist of two structural domains, F(1) containing the extramembraneous catalytic core and F(0) containing the membrane proton channel, linked together by a central stalk and a peripheral stalk. During catalysis, ATP synthesis in the catalytic domain of F(1) is coupled via a rotary mechanism of the central stalk subunits to proton translocation. Functionally, this protein is part of the stalk that links CF(0) to CF(1). It either transmits conformational changes from CF(0) to CF(1) or is implicated in proton conduction. This chain is ATP synthase subunit delta, found in Lactobacillus delbrueckii subsp. bulgaricus (strain ATCC BAA-365 / Lb-18).